We begin with the raw amino-acid sequence, 769 residues long: Neutral alpha-glucosidase C (769 aa).

Residue D366 is the Nucleophile of the active site. The active site involves E369. D442 acts as the Proton donor in catalysis.

This sequence belongs to the glycosyl hydrolase 31 family.

It carries out the reaction Hydrolysis of terminal, non-reducing (1-&gt;4)-linked alpha-D-glucose residues with release of alpha-D-glucose.. Has alpha-glucosidase activity. This is Neutral alpha-glucosidase C (GANC) from Macaca fascicularis (Crab-eating macaque).